The following is a 635-amino-acid chain: Peptidyl-prolyl cis-trans isomerase PASTICCINO1 (635 aa).

Over residues 1-10 (MAVGDQTEQN) the composition is skewed to polar residues. A disordered region spans residues 1–28 (MAVGDQTEQNYLPKKKKSETEDDKRRKK). PPIase FKBP-type domains follow at residues 51–147 (GDQV…LDFS), 175–260 (PYEV…VHFI), and 291–383 (DSRL…LGFE). TPR repeat units follow at residues 400-433 (ADKI…FNHV), 449-482 (NMLH…KPGH), and 483-516 (VKGL…DKSS). A calmodulin-binding region spans residues 530 to 546 (KEQEAESKARKQFKGLF). The segment covering 569–586 (EVDETKDNDDDETLEEEG) has biased composition (acidic residues). Residues 569-593 (EVDETKDNDDDETLEEEGATTVSTE) are disordered. Residues 609–629 (VMLQIGIQLGVVLIGILIFQF) form a helical; Anchor for type IV membrane protein membrane-spanning segment.

This sequence belongs to the FKBP-type PPIase family. As to quaternary structure, interacts with calmodulin (CaM). Interacts with RPM1 and NAC089. Interacts with the elongase complex core members KCR1, PAS2 and CER10. In terms of tissue distribution, expressed ubiquitously.

It localises to the endoplasmic reticulum membrane. The protein localises to the cytoplasm. Its subcellular location is the nucleus. The catalysed reaction is [protein]-peptidylproline (omega=180) = [protein]-peptidylproline (omega=0). Functionally, PPIases accelerate the folding of proteins. It catalyzes the cis-trans isomerization of proline imidic peptide bonds in oligopeptides. Essential protein regulating cell division, adhesion and elongation throughout the plant development and embryogenesis. Required for the spatial organization of apical meristems. Involved in the hormonal control of cell division and differentiation mediated by cytokinins and auxin. Regulates the function of NAC089 transcription factor by controlling its targeting to the nucleus upon plant cell division. Interacts with enzymes of the fatty acid elongase complex and favors the generation of very-long-chain fatty acids (VLCFAs) required for polar auxin transport and tissue patterning during plant development. This chain is Peptidyl-prolyl cis-trans isomerase PASTICCINO1 (PAS1), found in Arabidopsis thaliana (Mouse-ear cress).